We begin with the raw amino-acid sequence, 164 residues long: MADS-box transcription factor 51 (164 aa).

The 61-residue stretch at Ala-2–Ser-62 folds into the MADS-box domain. Positions Thr-133–Ala-164 are disordered.

As to expression, widely expressed.

Its subcellular location is the nucleus. Functionally, probable transcription factor involved in the regulation of flowering time under short day (SD) conditions. Functions as a promoter of flowering under SD conditions, upstream of EHD1, HD3A and MADS14, but downstream of GIGANTEA (GI). May transmit a SD promotion signal from GI to EHD1. Functions independently of MADS50 to control flowering time. The protein is MADS-box transcription factor 51 of Oryza sativa subsp. japonica (Rice).